A 124-amino-acid chain; its full sequence is Large ribosomal subunit protein bL12 (124 aa).

It belongs to the bacterial ribosomal protein bL12 family. Homodimer. Part of the ribosomal stalk of the 50S ribosomal subunit. Forms a multimeric L10(L12)X complex, where L10 forms an elongated spine to which 2 to 4 L12 dimers bind in a sequential fashion. Binds GTP-bound translation factors.

In terms of biological role, forms part of the ribosomal stalk which helps the ribosome interact with GTP-bound translation factors. Is thus essential for accurate translation. The chain is Large ribosomal subunit protein bL12 from Desulforamulus reducens (strain ATCC BAA-1160 / DSM 100696 / MI-1) (Desulfotomaculum reducens).